The sequence spans 219 residues: NAD(P)H-quinone oxidoreductase subunit I (219 aa).

4Fe-4S ferredoxin-type domains are found at residues 55–84 (GRIH…VDWV) and 95–124 (RNYS…MTEE). Positions 64, 67, 70, 74, 104, 107, 110, and 114 each coordinate [4Fe-4S] cluster. Residues 192 to 219 (LKAAGSMKAAEDERESSSSASNMEESAG) form a disordered region. Over residues 208 to 219 (SSSASNMEESAG) the composition is skewed to low complexity.

The protein belongs to the complex I 23 kDa subunit family. NDH-1 is composed of at least 11 different subunits. It depends on [4Fe-4S] cluster as a cofactor.

Its subcellular location is the cellular thylakoid membrane. It catalyses the reaction a plastoquinone + NADH + (n+1) H(+)(in) = a plastoquinol + NAD(+) + n H(+)(out). The catalysed reaction is a plastoquinone + NADPH + (n+1) H(+)(in) = a plastoquinol + NADP(+) + n H(+)(out). In terms of biological role, NDH-1 shuttles electrons from an unknown electron donor, via FMN and iron-sulfur (Fe-S) centers, to quinones in the respiratory and/or the photosynthetic chain. The immediate electron acceptor for the enzyme in this species is believed to be plastoquinone. Couples the redox reaction to proton translocation, and thus conserves the redox energy in a proton gradient. This chain is NAD(P)H-quinone oxidoreductase subunit I, found in Synechococcus sp. (strain CC9311).